Reading from the N-terminus, the 459-residue chain is Hepatocyte nuclear factor 3-beta (459 aa).

Residues D14–S93 are transactivation domain 1. Residues L106–L113 carry the Nuclear localization signal motif. Position 156 is a phosphothreonine (T156). Residues K159–Q252 constitute a DNA-binding region (fork-head). A Phosphoserine modification is found at S212. Residues G268–S281 show a composition bias toward low complexity. Residues G268–K366 form a disordered region. Phosphoserine is present on S284. Positions A295–P311 are enriched in polar residues. Phosphothreonine is present on T302. 4 positions are modified to phosphoserine: S304, S307, S308, and S310. A compositionally biased stretch (low complexity) spans P340 to P353. Residues E362–S459 form a transactivation domain 2 region. Residues S438 and S459 each carry the phosphoserine modification.

In terms of assembly, binds DNA as a monomer. Binds TLE1. Interacts with FOXA1 and FOXA3. Interacts with PRKDC. Interacts with AKT1. Interacts with TET1; this interaction may recruit TET1 to specific genomic loci to mediate their demethylation. In terms of processing, phosphorylation on Thr-156 abolishes binding to target promoters and subsequent transcription activation upon insulin stimulation. As to expression, restricted mainly to endoderm-derived tissues (lung, liver, stomach, and small intestine). Expressed in epididymis with region-specific expression pattern: no expression is observed in initial segment, low expression in proximal caput, gradiently higher levels of expression in middle and distal caput and highest level in corpus and cauda (at protein level).

The protein resides in the nucleus. It localises to the cytoplasm. Functionally, transcription factor that is involved in embryonic development, establishment of tissue-specific gene expression and regulation of gene expression in differentiated tissues. Is thought to act as a 'pioneer' factor opening the compacted chromatin for other proteins through interactions with nucleosomal core histones and thereby replacing linker histones at target enhancer and/or promoter sites. Binds DNA with the consensus sequence 5'-[AC]A[AT]T[AG]TT[GT][AG][CT]T[CT]-3'. In embryonic development is required for notochord formation. Involved in the development of multiple endoderm-derived organ systems such as the liver, pancreas and lungs; Foxa1 and Foxa2 seem to have at least in part redundant roles. FOXA1 and FOXA2 are essential for hepatic specification. FOXA1 and FOXA2 are required for morphogenesis and cell differentiation during formation of the lung. FOXA1 and FOXA2 are involved in bile duct formation; they positively regulate the binding glucocorticoid receptor/NR3C1 to the IL6 promoter. FOXA1 and FOXA2 regulate multiple phases of midbrain dopaminergic neuron development; they regulate expression of NEUROG2 at the beginning of mDA neurogenesis and of NR4A2 and EN1 in immature mDA neurons. Modulates the transcriptional activity of nuclear hormone receptors; inhibits AR-mediated transcription from the LCN5 promoter. Binds to fibrinogen beta promoter and is involved in IL6-induced fibrinogen beta transcriptional activation. Originally described as a transcription activator for a number of liver genes such as AFP, albumin, tyrosine aminotransferase, PEPCK, etc. Interacts with the cis-acting regulatory regions of these genes. Involved in glucose homeostasis; regulates the expression of genes important for glucose sensing in pancreatic beta-cells and glucose homeostasis. In pancreatic beta cells activates transcription of potassium channel subunits KCNJ11 and ABCC8. Involved in regulation of fat metabolism; activates transcriptional programs of lipid metabolism and ketogenesis at low insulin state. Involved in transcriptional regulation of MUC2 in the intestine. The sequence is that of Hepatocyte nuclear factor 3-beta (Foxa2) from Mus musculus (Mouse).